We begin with the raw amino-acid sequence, 166 residues long: MNYTSYILAFQLCVILCSSGCNCQAMFFKEIENLKEYFNASNPDVSDGGSLFVDILKKWREESDKTIIQSQIVSFYLKLFDNFKDNQIIQRSMDTIKEDMLGKFLNSSTSKREDFLKLIQIPVNDLQVQRKAINELIKVMNDLSPRSNLRKRKRSQNLFRGRRASK.

Positions 1–23 (MNYTSYILAFQLCVILCSSGCNC) are cleaved as a signal peptide. Residue Q24 is modified to Pyrrolidone carboxylic acid. N-linked (GlcNAc...) asparagine glycosylation is found at N39 and N106.

This sequence belongs to the type II (or gamma) interferon family. In terms of assembly, homodimer. Interacts with IFNGR1 (via extracellular domain); this interaction promotes IFNGR1 dimerization. Released primarily from activated T lymphocytes.

The protein resides in the secreted. In terms of biological role, type II interferon produced by immune cells such as T-cells and NK cells that plays crucial roles in antimicrobial, antiviral, and antitumor responses by activating effector immune cells and enhancing antigen presentation. Primarily signals through the JAK-STAT pathway after interaction with its receptor IFNGR1 to affect gene regulation. Upon IFNG binding, IFNGR1 intracellular domain opens out to allow association of downstream signaling components JAK2, JAK1 and STAT1, leading to STAT1 activation, nuclear translocation and transcription of IFNG-regulated genes. Many of the induced genes are transcription factors such as IRF1 that are able to further drive regulation of a next wave of transcription. Plays a role in class I antigen presentation pathway by inducing a replacement of catalytic proteasome subunits with immunoproteasome subunits. In turn, increases the quantity, quality, and repertoire of peptides for class I MHC loading. Increases the efficiency of peptide generation also by inducing the expression of activator PA28 that associates with the proteasome and alters its proteolytic cleavage preference. Up-regulates as well MHC II complexes on the cell surface by promoting expression of several key molecules such as cathepsins B/CTSB, H/CTSH, and L/CTSL. Participates in the regulation of hematopoietic stem cells during development and under homeostatic conditions by affecting their development, quiescence, and differentiation. This Canis lupus familiaris (Dog) protein is Interferon gamma (IFNG).